A 431-amino-acid chain; its full sequence is Tol-Pal system protein TolB (431 aa).

A signal peptide spans M1–S19.

This sequence belongs to the TolB family. As to quaternary structure, the Tol-Pal system is composed of five core proteins: the inner membrane proteins TolA, TolQ and TolR, the periplasmic protein TolB and the outer membrane protein Pal. They form a network linking the inner and outer membranes and the peptidoglycan layer.

It localises to the periplasm. Part of the Tol-Pal system, which plays a role in outer membrane invagination during cell division and is important for maintaining outer membrane integrity. TolB occupies a key intermediary position in the Tol-Pal system because it communicates directly with both membrane-embedded components, Pal in the outer membrane and TolA in the inner membrane. The protein is Tol-Pal system protein TolB of Wigglesworthia glossinidia brevipalpis.